The following is a 561-amino-acid chain: Protein NRT1/ PTR FAMILY 5.13 (561 aa).

A helical transmembrane segment spans residues Ala-78 to Leu-98. Thr-103 is modified (phosphothreonine). 10 consecutive transmembrane segments (helical) span residues Ile-104–Leu-124, Ser-133–Gly-153, Phe-183–Val-203, Trp-211–Leu-231, Ile-324–Phe-344, Ile-361–Tyr-381, Ile-405–Lys-425, Ile-447–Gly-467, Ala-486–Ile-506, and Tyr-530–Ser-550.

The protein belongs to the major facilitator superfamily. Proton-dependent oligopeptide transporter (POT/PTR) (TC 2.A.17) family. Expressed in roots, flowers and siliques. Detected in stems and leaves.

It localises to the membrane. This Arabidopsis thaliana (Mouse-ear cress) protein is Protein NRT1/ PTR FAMILY 5.13 (NPF5.13).